The primary structure comprises 126 residues: Large ribosomal subunit protein bL20c (126 aa).

It belongs to the bacterial ribosomal protein bL20 family.

The protein localises to the plastid. The protein resides in the chloroplast. Binds directly to 23S ribosomal RNA and is necessary for the in vitro assembly process of the 50S ribosomal subunit. It is not involved in the protein synthesizing functions of that subunit. The protein is Large ribosomal subunit protein bL20c of Illicium oligandrum (Star anise).